Here is a 105-residue protein sequence, read N- to C-terminus: Large ribosomal subunit protein uL24 (105 aa).

Belongs to the universal ribosomal protein uL24 family. As to quaternary structure, part of the 50S ribosomal subunit.

Functionally, one of two assembly initiator proteins, it binds directly to the 5'-end of the 23S rRNA, where it nucleates assembly of the 50S subunit. In terms of biological role, one of the proteins that surrounds the polypeptide exit tunnel on the outside of the subunit. In Lachnoclostridium phytofermentans (strain ATCC 700394 / DSM 18823 / ISDg) (Clostridium phytofermentans), this protein is Large ribosomal subunit protein uL24.